A 505-amino-acid polypeptide reads, in one-letter code: Alkylglycerol monooxygenase (505 aa).

The next 2 helical transmembrane spans lie at 56–76 and 104–124; these read VSAW…ISGH and AVAI…ELPW. A Fatty acid hydroxylase domain is found at 130–262; the sequence is WIFCLFFQDF…FIIWDKMFNT (133 aa). The Histidine box-1 motif lies at 145–149; it reads HRAVH. The Histidine box-2 signature appears at 158–162; sequence HTIHH. The Histidine box-3 motif lies at 234 to 238; it reads HRVHH. 4 consecutive transmembrane segments (helical) span residues 366-386, 396-416, 430-450, and 452-472; these read ILVK…FFHF, LDCT…GAFF, CCGV…AGTH, and LFVI…VLVE.

The protein belongs to the sterol desaturase family. TMEM195 subfamily. Requires Fe cation as cofactor.

The protein localises to the endoplasmic reticulum membrane. It catalyses the reaction 1-O-(1,2-saturated-alkyl)-sn-glycerol + (6R)-L-erythro-5,6,7,8-tetrahydrobiopterin + O2 = a 1-(1-hydroxyalkyl)-sn-glycerol + (6R)-L-erythro-6,7-dihydrobiopterin + H2O. Functionally, glyceryl-ether monooxygenase that cleaves the O-alkyl bond of ether lipids. This chain is Alkylglycerol monooxygenase, found in Caenorhabditis elegans.